The chain runs to 227 residues: 7-cyano-7-deazaguanine synthase (227 aa).

11-21 (VSGGMDSAALL) provides a ligand contact to ATP. Zn(2+) contacts are provided by Cys192, Cys200, Cys203, and Cys206.

The protein belongs to the QueC family. Zn(2+) is required as a cofactor.

The catalysed reaction is 7-carboxy-7-deazaguanine + NH4(+) + ATP = 7-cyano-7-deazaguanine + ADP + phosphate + H2O + H(+). It participates in purine metabolism; 7-cyano-7-deazaguanine biosynthesis. Its function is as follows. Catalyzes the ATP-dependent conversion of 7-carboxy-7-deazaguanine (CDG) to 7-cyano-7-deazaguanine (preQ(0)). This is 7-cyano-7-deazaguanine synthase from Persephonella marina (strain DSM 14350 / EX-H1).